Consider the following 96-residue polypeptide: Large ribosomal subunit protein bL27 (96 aa).

A propeptide spanning residues 1-9 is cleaved from the precursor; the sequence is MLRLDLQFF.

It belongs to the bacterial ribosomal protein bL27 family. The N-terminus is cleaved by ribosomal processing cysteine protease Prp.

This is Large ribosomal subunit protein bL27 from Geobacillus kaustophilus (strain HTA426).